Reading from the N-terminus, the 433-residue chain is 26S proteasome regulatory subunit 7 (433 aa).

Residues 1-23 form a disordered region; the sequence is MPDYLGADQRKTKEEEKEDKPIR. Over residues 8–23 the composition is skewed to basic and acidic residues; sequence DQRKTKEEEKEDKPIR. 216-223 serves as a coordination point for ATP; it reads GPPGTGKT.

It belongs to the AAA ATPase family. In terms of processing, phosphorylated. Dephosphorylated by ublcp1 which impairs psmc2 ATPase activity and disrupts 26S proteasome assembly.

The protein localises to the cytoplasm. It is found in the nucleus. Its function is as follows. The 26S proteasome is involved in the ATP-dependent degradation of ubiquitinated proteins. The regulatory (or ATPase) complex confers ATP dependency and substrate specificity to the 26S complex. The chain is 26S proteasome regulatory subunit 7 (psmc2) from Xenopus laevis (African clawed frog).